The primary structure comprises 897 residues: High molecular weight rhoptry protein 3 (897 aa).

The N-terminal stretch at 1–24 is a signal peptide; sequence MRSKHLVTLFIITFLSFSTVKVWG. Intrachain disulfides connect cysteine 157/cysteine 231, cysteine 244/cysteine 253, cysteine 262/cysteine 276, cysteine 421/cysteine 620, and cysteine 475/cysteine 536. The helical transmembrane segment at 597-615 threads the bilayer; sequence FVLYFISIISVLYINEYYY. 2 disordered regions span residues 788 to 845 and 859 to 897; these read KEQS…SNLK and QLDKEKPKKKKSKRKKKRDSSSDRILLEESKTFTSENEL. Positions 792–801 are enriched in polar residues; the sequence is KSTSAASTSD. Residues 802–817 are compositionally biased toward low complexity; sequence EISGSEGPSTESTSTG. At serine 804 the chain carries Phosphoserine; by CDPK1. The segment covering 820-832 has biased composition (basic and acidic residues); that stretch reads GEDKTTDNTYKEM. Residues 865–876 show a composition bias toward basic residues; sequence PKKKKSKRKKKR. The span at 877-889 shows a compositional bias: basic and acidic residues; the sequence is DSSSDRILLEESK.

As to quaternary structure, component of the RhopH complex. RhopH complex is composed of CLAG3.1/CLAG3.2, RhopH2 and RhopH3 with a 1:1:1 subunit stoichiometry. Interacts with CLAG3.1/CLAG3.2. Interacts with CDPK1; the interaction promotes RhopH3 phosphorylation in merozoites. Post-translationally, proteolytically cleaved near C-terminus.

It is found in the host cell membrane. It localises to the parasitophorous vacuole membrane. The protein localises to the cytoplasm. The protein resides in the cytoplasmic vesicle. Its subcellular location is the secretory vesicle. It is found in the rhoptry. In terms of biological role, participates in the formation of new permeability pathways in Plasmodium-infected erythrocytes enabling the uptake of nutrients from the blood plasma. Required for maintaining invasion capacity of merozoites. Required for the trophozoite to schizont developmental transition of the intracellular parasite. The sequence is that of High molecular weight rhoptry protein 3 from Plasmodium falciparum (isolate 3D7).